Consider the following 338-residue polypeptide: Formamidase (338 aa).

One can recognise a CN hydrolase domain in the interval 15 to 257 (VVIGLAQLAL…DEIVCCELRP (243 aa)). The active-site Proton acceptor is the E61. Residue K130 is the Proton donor of the active site. The active-site Nucleophile is the C163.

This sequence belongs to the carbon-nitrogen hydrolase superfamily. Aliphatic amidase family.

The enzyme catalyses formamide + H2O = formate + NH4(+). Its function is as follows. Is an aliphatic amidase with a restricted substrate specificity, as it only hydrolyzes formamide. The chain is Formamidase from Pseudomonas syringae pv. syringae (strain B728a).